The chain runs to 88 residues: uncharacterized protein (88 aa).

It to E.coli YihD.

This is an uncharacterized protein from Haemophilus influenzae (strain ATCC 51907 / DSM 11121 / KW20 / Rd).